Here is a 95-residue protein sequence, read N- to C-terminus: Integration host factor subunit beta (95 aa).

This sequence belongs to the bacterial histone-like protein family. As to quaternary structure, heterodimer of an alpha and a beta chain.

This protein is one of the two subunits of integration host factor, a specific DNA-binding protein that functions in genetic recombination as well as in transcriptional and translational control. This is Integration host factor subunit beta from Erwinia tasmaniensis (strain DSM 17950 / CFBP 7177 / CIP 109463 / NCPPB 4357 / Et1/99).